The following is a 437-amino-acid chain: Four-jointed box protein 1 (437 aa).

A signal peptide spans 1–24 (MGRRMRGAAATAGLWLLALGSLLA). 2 disordered regions span residues 33–66 (RTEL…PLPP) and 88–116 (AGAD…EESA). Pro residues predominate over residues 57 to 66 (APAPRFPLPP). Asn-248 carries N-linked (GlcNAc...) asparagine glycosylation.

This sequence belongs to the FJX1/FJ family. Post-translationally, glycosylated. In terms of processing, undergoes proteolytic cleavage.

It is found in the secreted. Functionally, acts as an inhibitor of dendrite extension and branching. This Homo sapiens (Human) protein is Four-jointed box protein 1 (FJX1).